The following is a 738-amino-acid chain: Eukaryotic translation initiation factor 3 subunit B (738 aa).

Residues 1–10 (MAPSFENLSE) show a composition bias toward polar residues. The interval 1 to 20 (MAPSFENLSEQDLHEEEEEE) is disordered. Residues 40–126 (TFVVIDGLPV…HTLLVNKLMD (87 aa)) enclose the RRM domain. WD repeat units lie at residues 193–230 (AHWT…KQKQ), 232–289 (PHPF…RSFV), 301–342 (QPKK…LLGK), 454–494 (SLKD…SFFA), 511–554 (IEKK…EKND), and 569–607 (VDHY…HTFS). The interval 693 to 720 (EAYGLPEEADQPKAAKDAPTNTEDKGET) is disordered. Positions 702-720 (DQPKAAKDAPTNTEDKGET) are enriched in basic and acidic residues.

Belongs to the eIF-3 subunit B family. In terms of assembly, component of the eukaryotic translation initiation factor 3 (eIF-3) complex.

Its subcellular location is the cytoplasm. In terms of biological role, RNA-binding component of the eukaryotic translation initiation factor 3 (eIF-3) complex, which is involved in protein synthesis of a specialized repertoire of mRNAs and, together with other initiation factors, stimulates binding of mRNA and methionyl-tRNAi to the 40S ribosome. The eIF-3 complex specifically targets and initiates translation of a subset of mRNAs involved in cell proliferation. In Emericella nidulans (strain FGSC A4 / ATCC 38163 / CBS 112.46 / NRRL 194 / M139) (Aspergillus nidulans), this protein is Eukaryotic translation initiation factor 3 subunit B (prt1).